A 197-amino-acid chain; its full sequence is Histidine biosynthesis bifunctional protein HisIE (197 aa).

Residues 1–108 (MMTLYPVVVQ…RFEETGSPTF (108 aa)) form a phosphoribosyl-AMP cyclohydrolase region. Positions 109–197 (WLELYRLVRK…VMRELEKRRK (89 aa)) are phosphoribosyl-ATP pyrophosphohydrolase.

This sequence in the N-terminal section; belongs to the PRA-CH family. In the C-terminal section; belongs to the PRA-PH family.

It localises to the cytoplasm. It catalyses the reaction 1-(5-phospho-beta-D-ribosyl)-ATP + H2O = 1-(5-phospho-beta-D-ribosyl)-5'-AMP + diphosphate + H(+). The enzyme catalyses 1-(5-phospho-beta-D-ribosyl)-5'-AMP + H2O = 1-(5-phospho-beta-D-ribosyl)-5-[(5-phospho-beta-D-ribosylamino)methylideneamino]imidazole-4-carboxamide. It functions in the pathway amino-acid biosynthesis; L-histidine biosynthesis; L-histidine from 5-phospho-alpha-D-ribose 1-diphosphate: step 2/9. Its pathway is amino-acid biosynthesis; L-histidine biosynthesis; L-histidine from 5-phospho-alpha-D-ribose 1-diphosphate: step 3/9. The polypeptide is Histidine biosynthesis bifunctional protein HisIE (hisI) (Thermotoga maritima (strain ATCC 43589 / DSM 3109 / JCM 10099 / NBRC 100826 / MSB8)).